We begin with the raw amino-acid sequence, 397 residues long: Tauropine dehydrogenase (397 aa).

Belongs to the lysopine/nopaline/octopine/opine/vitopine dehydrogenases family.

It carries out the reaction tauropine + NAD(+) + H2O = taurine + pyruvate + NADH + H(+). With respect to regulation, subject to substrate inhibition by pyruvate for the reverse reaction but not for the forward reaction of the tauropine dehydrogenase activity. Functionally, may play a role in maintaining a redox balance during environmental and functional hypoxia. Exhibits high specificity for taurine and in addition, requires both alpha amino group and C-2 carbon chain length as a critical factor for active site binding of the amino acid. A methyl group in the beta position may be critical for active site binding of the keto acid. In the reverse reaction requires NAD(H) for the activity but not NADP(H). This is Tauropine dehydrogenase from Arabella iricolor (Opal worm).